A 262-amino-acid chain; its full sequence is Type III pantothenate kinase (262 aa).

10-17 (DIGNTTTV) is a binding site for ATP. 110-113 (GADR) contributes to the substrate binding site. Asp112 (proton acceptor) is an active-site residue. Asp134 contacts K(+). Thr137 lines the ATP pocket. Thr189 serves as a coordination point for substrate.

This sequence belongs to the type III pantothenate kinase family. Homodimer. NH4(+) serves as cofactor. The cofactor is K(+).

It localises to the cytoplasm. The enzyme catalyses (R)-pantothenate + ATP = (R)-4'-phosphopantothenate + ADP + H(+). It functions in the pathway cofactor biosynthesis; coenzyme A biosynthesis; CoA from (R)-pantothenate: step 1/5. Its function is as follows. Catalyzes the phosphorylation of pantothenate (Pan), the first step in CoA biosynthesis. In Deinococcus radiodurans (strain ATCC 13939 / DSM 20539 / JCM 16871 / CCUG 27074 / LMG 4051 / NBRC 15346 / NCIMB 9279 / VKM B-1422 / R1), this protein is Type III pantothenate kinase.